A 158-amino-acid polypeptide reads, in one-letter code: Anaerobic nitrite reductase AHB2 (158 aa).

A Globin domain is found at 5-154; the sequence is GFTEKQEALV…LALAIKTEMK (150 aa). The Homodimerization signature appears at 38–42; sequence EIAPA. Residues S48, K62, H66, and H101 each coordinate heme b. Positions 108 to 120 match the Homodimerization motif; it reads DPHFEVVKEALLR.

Belongs to the plant globin family. Unable to dimerize. Requires heme b as cofactor. In terms of tissue distribution, expressed in rosette leaves but not in roots.

It is found in the cytoplasm. The protein localises to the nucleus. It carries out the reaction Fe(III)-heme b-[protein] + nitric oxide + H2O = Fe(II)-heme b-[protein] + nitrite + 2 H(+). Functionally, phytoglobin that reduces nitrite to nitric oxide (NO) under anoxic conditions (e.g. during flooding or in waterlogged soil). May not function as an oxygen storage or transport protein. Has an unusually high affinity for O(2) through an hexacoordinate heme iron because of a very low dissociation constant. In Arabidopsis thaliana (Mouse-ear cress), this protein is Anaerobic nitrite reductase AHB2.